Here is a 714-residue protein sequence, read N- to C-terminus: Testis-expressed protein 13D (714 aa).

Disordered stretches follow at residues 300–419 (GSFP…GCSD) and 431–675 (RRCK…PASF). Composition is skewed to basic and acidic residues over residues 307-320 (SRSH…ERSQ) and 366-378 (GNRE…EGPK). Basic residues predominate over residues 379–392 (RARRMHTLVFRRSH). A compositionally biased stretch (polar residues) spans 403-416 (TVPQGDSRSYSQEG). Basic and acidic residues-rich tracts occupy residues 495–505 (CKPEEGPERPQ), 557–567 (CKPEEGPERPQ), and 636–646 (SRSHGVRESPK). Residues 677–706 (VPVNWKCPWCKAINFSWRTACYKCKKACVP) form a RanBP2-type zinc finger.

The protein belongs to the TEX13 family.

The polypeptide is Testis-expressed protein 13D (Homo sapiens (Human)).